Consider the following 317-residue polypeptide: Melanocyte-stimulating hormone receptor (317 aa).

Over 1 to 37 (MAVQGSQRRLLGSLNSTPTAIPQLGLAANQTGARCLE) the chain is Extracellular. Asparagine 29 is a glycosylation site (N-linked (GlcNAc...) asparagine). Residues 38 to 63 (VSISDGLFLSLGLVSLVENALVVATI) form a helical membrane-spanning segment. Residues 64-72 (AKNRNLHSP) lie on the Cytoplasmic side of the membrane. A helical membrane pass occupies residues 73–93 (MYCFICCLALSDLLVSGSNVL). Over 94 to 118 (ETAVILLLEAGALVARAAVLQQLDN) the chain is Extracellular. A helical membrane pass occupies residues 119–140 (VIDVITCSSMLSSLCFLGAIAV). The Cytoplasmic portion of the chain corresponds to 141–163 (DRYISIFYALRYHSIVTLPRARR). Residues 164-183 (AVAAIWVASVVFSTLFIAYY) traverse the membrane as a helical segment. At 184 to 191 (DHVAVLLC) the chain is on the extracellular side. The helical transmembrane segment at 192 to 211 (LVVFFLAMLVLMAVLYVHML) threads the bilayer. Residues 212-240 (ARACQHAQGIARLHKRQRPVHQGFGLKGA) lie on the Cytoplasmic side of the membrane. The chain crosses the membrane as a helical span at residues 241 to 266 (VTLTILLGIFFLCWGPFFLHLTLIVL). At 267–279 (CPEHPTCGCIFKN) the chain is on the extracellular side. Residues 280–300 (FNLFLALIICNAIIDPLIYAF) form a helical membrane-spanning segment. Residues 301–317 (HSQELRRTLKEVLTCSW) lie on the Cytoplasmic side of the membrane. Cysteine 315 is lipidated: S-palmitoyl cysteine.

It belongs to the G-protein coupled receptor 1 family. As to quaternary structure, interacts with MGRN1, but does not undergo MGRN1-mediated ubiquitination; this interaction competes with GNAS-binding and thus inhibits agonist-induced cAMP production. Interacts with OPN3; the interaction results in a decrease in MC1R-mediated cAMP signaling and ultimately a decrease in melanin production in melanocytes. As to expression, expressed in melanocytes. Expressed in corticoadrenal tissue.

The protein resides in the cell membrane. Receptor for MSH (alpha, beta and gamma) and ACTH. The activity of this receptor is mediated by G proteins which activate adenylate cyclase. Mediates melanogenesis, the production of eumelanin (black/brown) and phaeomelanin (red/yellow), via regulation of cAMP signaling in melanocytes. The polypeptide is Melanocyte-stimulating hormone receptor (MC1R) (Homo sapiens (Human)).